The following is a 400-amino-acid chain: NADH-ubiquinone oxidoreductase 49 kDa subunit (400 aa).

This sequence belongs to the complex I 49 kDa subunit family.

The protein localises to the mitochondrion. It carries out the reaction a ubiquinone + NADH + 5 H(+)(in) = a ubiquinol + NAD(+) + 4 H(+)(out). In terms of biological role, core subunit of the mitochondrial membrane respiratory chain NADH dehydrogenase (Complex I) that is believed to belong to the minimal assembly required for catalysis. Complex I functions in the transfer of electrons from NADH to the respiratory chain. The immediate electron acceptor for the enzyme is believed to be ubiquinone. Component of the iron-sulfur (IP) fragment of the enzyme. Component of the iron-sulfur (IP) fragment of the enzyme. In Paramecium tetraurelia, this protein is NADH-ubiquinone oxidoreductase 49 kDa subunit (NAD7).